Reading from the N-terminus, the 533-residue chain is Tryptophan 7-halogenase KtzQ (533 aa).

FAD-binding residues include Gly-14, Thr-16, Ala-17, Ala-40, Glu-50, and Ala-51. Lys-80 is a catalytic residue. Glu-359 contacts L-tryptophan. Chloride contacts are provided by Thr-361 and Gly-362. Leu-363 contributes to the FAD binding site. Residues Tyr-456, Tyr-457, Glu-463, and Phe-467 each coordinate L-tryptophan.

The protein belongs to the flavin-dependent halogenase family. Bacterial tryptophan halogenase subfamily.

It carries out the reaction L-tryptophan + FADH2 + chloride + O2 = 7-chloro-L-tryptophan + FAD + 2 H2O. Its function is as follows. Involved in the biosynthesis of kutznerides, actinomycete-derived antifungal and antimicrobial cyclic hexadepsipeptides. Together with KtzR, catalyzes the regiospecific dichlorination of L-tryptophan (L-Trp) to produce 6,7-dichloro-L-tryptophan. KtzQ catalyzes the chlorination of L-Trp at C7 position to yield 7-chlorotryptophan. Can also use 6-chloro-L-tryptophan as substrate and form 6,7-dichloro-L-tryptophan, but has a preference for halogenation at the 7 position of unmodified L-Trp. Cannot use piperazic acid or gamma,delta-dehydropiperazic acid. The chain is Tryptophan 7-halogenase KtzQ from Kutzneria sp. (strain 744).